Consider the following 552-residue polypeptide: Glutamine--tRNA ligase (552 aa).

The 'HIGH' region signature appears at 34–44; that stretch reads PEPNGYLHIGH. ATP is bound by residues 35-37 and 41-47; these read EPN and HIGHAKS. L-glutamine-binding residues include Asp67 and Tyr212. Residues Thr231, 261–262, and 269–271 each bind ATP; these read RL and MSK. The 'KMSKS' region signature appears at 268–272; that stretch reads IMSKR.

Belongs to the class-I aminoacyl-tRNA synthetase family. As to quaternary structure, monomer.

It is found in the cytoplasm. The catalysed reaction is tRNA(Gln) + L-glutamine + ATP = L-glutaminyl-tRNA(Gln) + AMP + diphosphate. In Pectobacterium atrosepticum (strain SCRI 1043 / ATCC BAA-672) (Erwinia carotovora subsp. atroseptica), this protein is Glutamine--tRNA ligase.